Here is a 212-residue protein sequence, read N- to C-terminus: Peptide methionine sulfoxide reductase MsrA (212 aa).

Cysteine 52 is an active-site residue.

This sequence belongs to the MsrA Met sulfoxide reductase family.

The enzyme catalyses L-methionyl-[protein] + [thioredoxin]-disulfide + H2O = L-methionyl-(S)-S-oxide-[protein] + [thioredoxin]-dithiol. The catalysed reaction is [thioredoxin]-disulfide + L-methionine + H2O = L-methionine (S)-S-oxide + [thioredoxin]-dithiol. Functionally, has an important function as a repair enzyme for proteins that have been inactivated by oxidation. Catalyzes the reversible oxidation-reduction of methionine sulfoxide in proteins to methionine. This chain is Peptide methionine sulfoxide reductase MsrA, found in Escherichia fergusonii (strain ATCC 35469 / DSM 13698 / CCUG 18766 / IAM 14443 / JCM 21226 / LMG 7866 / NBRC 102419 / NCTC 12128 / CDC 0568-73).